We begin with the raw amino-acid sequence, 231 residues long: Fibronectin type III domain-containing protein 4 (231 aa).

Positions 1 to 40 (MPLAPPANSVETMASLMPLSPYLSPTVLLLVSCDLGFVRA) are cleaved as a signal peptide. Residues 41 to 163 (DRPPSPVNVT…GLDGERPLQT (123 aa)) lie on the Extracellular side of the membrane. Residues 43 to 136 (PPSPVNVTVT…PRVHFRTLKG (94 aa)) form the Fibronectin type-III domain. N-linked (GlcNAc...) asparagine glycosylation is found at N48 and N143. The segment at 118 to 156 (GLRGESPPGPRVHFRTLKGSDRLPSNSSSPGDITVEGLD) is disordered. The helical transmembrane segment at 164–184 (GEVVIIVVVLLMWAAVIGLFC) threads the bilayer. At 185 to 231 (RQYDIIKDNDSNNNPKEKGKGPEQSPQGRPVGTTRQKKSPSINTIDV) the chain is on the cytoplasmic side. Residues 193–205 (NDSNNNPKEKGKG) are compositionally biased toward basic and acidic residues. The segment at 193–231 (NDSNNNPKEKGKGPEQSPQGRPVGTTRQKKSPSINTIDV) is disordered.

As to expression, predominantly expressed in the liver and in the brain, including in the cortex, hypothalamus and hippocampus. Also expressed in heart, lung, kidney and testis. In the colon, expressed in the epithelium and in a subset of immune cells in lymphoid aggregates.

It localises to the membrane. It is found in the secreted. Its function is as follows. Has anti-inflammatory properties. In the colon, acts on macrophages to down-regulate inflammation. May suppress osteoclastogenesis and mature osteoclast resorptive function. In white adipose tissue, decreases local inflammation, via interaction with GPR116. Also required for proper systemic glucose tolerance, specifically sensitizing white adipocytes to insulin and promoting glucose uptake. The insulin sensitizing function in adipose tissue is mediated by interaction with ADGRF5/GPR116 and activation of cAMP signaling. In Mus musculus (Mouse), this protein is Fibronectin type III domain-containing protein 4 (Fndc4).